We begin with the raw amino-acid sequence, 64 residues long: uncharacterized protein (64 aa).

This is an uncharacterized protein from Bacillus subtilis (strain 168).